A 110-amino-acid chain; its full sequence is Plasma membrane ATPase (110 aa).

Residues Asp-72 and Asp-76 each coordinate Mg(2+). The disordered stretch occupies residues 88 to 110; that stretch reads APESTSLNLPNDKELSEIAEQAK. A compositionally biased stretch (basic and acidic residues) spans 98-110; it reads NDKELSEIAEQAK.

The protein belongs to the cation transport ATPase (P-type) (TC 3.A.3) family. Type IIIA subfamily. Post-translationally, the N-terminus is blocked.

The protein resides in the cell membrane. The catalysed reaction is ATP + H2O + H(+)(in) = ADP + phosphate + 2 H(+)(out). The plasma membrane ATPase of plants and fungi is a hydrogen ion pump. The proton gradient it generates drives the active transport of nutrients by H(+)-symport. The resulting external acidification and/or internal alkinization may mediate growth responses. The polypeptide is Plasma membrane ATPase (Avena sativa (Oat)).